Consider the following 353-residue polypeptide: Methionine import ATP-binding protein MetN (353 aa).

The ABC transporter domain maps to 7-249 (LENIDVTFKQ…PKEELSRQFV (243 aa)). 41–48 (GYSGAGKS) serves as a coordination point for ATP.

This sequence belongs to the ABC transporter superfamily. Methionine importer (TC 3.A.1.24) family. In terms of assembly, the complex is composed of two ATP-binding proteins (MetN), two transmembrane proteins (MetI) and a solute-binding protein (MetQ).

The protein resides in the cell membrane. The enzyme catalyses L-methionine(out) + ATP + H2O = L-methionine(in) + ADP + phosphate + H(+). The catalysed reaction is D-methionine(out) + ATP + H2O = D-methionine(in) + ADP + phosphate + H(+). Part of the ABC transporter complex MetNIQ involved in methionine import. Responsible for energy coupling to the transport system. The protein is Methionine import ATP-binding protein MetN of Ligilactobacillus salivarius (strain UCC118) (Lactobacillus salivarius).